Consider the following 171-residue polypeptide: Co-chaperone protein HscB homolog (171 aa).

A J domain is found at 2–74 (NYFELFGLPI…LRRAEYLLSL (73 aa)).

This sequence belongs to the HscB family. Interacts with HscA and stimulates its ATPase activity.

Functionally, co-chaperone involved in the maturation of iron-sulfur cluster-containing proteins. Seems to help targeting proteins to be folded toward HscA. This Vibrio cholerae serotype O1 (strain M66-2) protein is Co-chaperone protein HscB homolog.